Here is a 1081-residue protein sequence, read N- to C-terminus: Zinc finger protein 827 (1081 aa).

Residues 1 to 10 (MPRRKQEQPK) are compositionally biased toward basic and acidic residues. The segment at 1 to 14 (MPRRKQEQPKRLPS) is mediates direct interaction with RBBP4. A disordered region spans residues 1–77 (MPRRKQEQPK…DTSLGSTTPS (77 aa)). The RRK motif; mediates NuRD recruitment to telomeres signature appears at 3–5 (RRK). A compositionally biased stretch (polar residues) spans 62–77 (EQSTSPDTSLGSTTPS). Residues Lys176, Lys216, and Lys226 each participate in a glycyl lysine isopeptide (Lys-Gly) (interchain with G-Cter in SUMO2) cross-link. Disordered stretches follow at residues 258–280 (KKVSERSLTPGQEHPPPASSFLS) and 305–348 (EKSS…SLEL). The span at 327 to 344 (VSPPPPPPPPPPPPPPPQ) shows a compositional bias: pro residues. Residues Lys360 and Lys372 each participate in a glycyl lysine isopeptide (Lys-Gly) (interchain with G-Cter in SUMO2) cross-link. 3 consecutive C2H2-type zinc fingers follow at residues 374 to 396 (FQCPICGLVIKRKSYWKRHMVIH), 402 to 424 (HQCPLCPFRCARKDNLKSHMKVH), and 433 to 455 (FQCQLCPFTSSRHFSLKLHMRCH). Residues Lys466, Lys475, Lys523, Lys549, Lys580, Lys587, and Lys597 each participate in a glycyl lysine isopeptide (Lys-Gly) (interchain with G-Cter in SUMO2) cross-link. Residues 525–553 (EPKEDNGLPTSFTLNTADRPANHTKLKDP) form a disordered region. Positions 616–627 (VFSPESEVSTPG) are enriched in polar residues. The tract at residues 616–640 (VFSPESEVSTPGVSEDALKPQEGKG) is disordered. Positions 631-640 (DALKPQEGKG) are enriched in basic and acidic residues. Residues Lys634, Lys639, and Lys658 each participate in a glycyl lysine isopeptide (Lys-Gly) (interchain with G-Cter in SUMO2) cross-link. Residue Lys673 forms a Glycyl lysine isopeptide (Lys-Gly) (interchain with G-Cter in SUMO1); alternate linkage. A Glycyl lysine isopeptide (Lys-Gly) (interchain with G-Cter in SUMO2); alternate cross-link involves residue Lys673. Residues Lys704, Lys710, Lys742, Lys778, and Lys798 each participate in a glycyl lysine isopeptide (Lys-Gly) (interchain with G-Cter in SUMO2) cross-link. 2 consecutive C2H2-type zinc fingers follow at residues 817–839 (FPCDVCGKVFGRQQTLSRHLSLH) and 845–867 (YKCHLCPYAAKCRANLNQHLTVH). Residues Lys870 and Lys891 each participate in a glycyl lysine isopeptide (Lys-Gly) (interchain with G-Cter in SUMO2) cross-link. C2H2-type zinc fingers lie at residues 897–919 (YSCHVCGFETELNVQFVSHMSLH) and 929–952 (ICCTACDFVTMEEAEIKTHIGTKH). Residues 947–960 (HIGTKHTGEDRKTP) are compositionally biased toward basic and acidic residues. The interval 947-1013 (HIGTKHTGED…GSQPSLNSEE (67 aa)) is disordered. Residue Lys958 forms a Glycyl lysine isopeptide (Lys-Gly) (interchain with G-Cter in SUMO2) linkage. The segment covering 961–978 (SESNSPSSSSLSALSDSA) has biased composition (low complexity). Positions 979-988 (NSKDDSDGSQ) are enriched in basic and acidic residues. Lys1014 participates in a covalent cross-link: Glycyl lysine isopeptide (Lys-Gly) (interchain with G-Cter in SUMO2). 2 consecutive C2H2-type zinc fingers follow at residues 1019 to 1041 (FECVFCNFVCKTKNMFERHLQIH) and 1047 to 1069 (FECDVCHKFMKTPEQLLEHKKCH).

This sequence belongs to the krueppel C2H2-type zinc-finger protein family. As to quaternary structure, part of a transcription inhibitory ribonucleoprotein complex composed at least of the circular RNA circZNF827, HNRNPK and HNRNPL. Interacts with the nucleosome remodeling and histone deacetylase/NuRD complex. Interacts with RBBP4; the interaction is direct and recruits RBBP4, a component of the NuRD complex, to telomeres.

The protein resides in the nucleus. It is found in the chromosome. Its subcellular location is the telomere. Functionally, as part of a ribonucleoprotein complex composed at least of HNRNPK, HNRNPL and the circular RNA circZNF827 that nucleates the complex on chromatin, may negatively regulate the transcription of genes involved in neuronal differentiation. Could also recruit the nucleosome remodeling and histone deacetylase/NuRD complex to telomeric regions of chromosomes to regulate chromatin remodeling as part of telomere maintenance. This is Zinc finger protein 827 (ZNF827) from Macaca fascicularis (Crab-eating macaque).